The sequence spans 547 residues: Beta,beta-carotene 15,15'-dioxygenase (547 aa).

Fe cation-binding residues include H172, H237, H308, and H514. The segment covering 528–540 has biased composition (basic and acidic residues); the sequence is QAASEEQRDRASD. The segment at 528–547 is disordered; it reads QAASEEQRDRASDCHGAPLT.

The protein belongs to the carotenoid oxygenase family. Fe(2+) serves as cofactor. In terms of tissue distribution, highly expressed in retinal pigment epithelium. Also expressed in kidney, testis, liver, brain, small intestine and colon.

It localises to the cytoplasm. Its subcellular location is the cytosol. It catalyses the reaction all-trans-beta-carotene + O2 = 2 all-trans-retinal. Its pathway is cofactor metabolism; retinol metabolism. In terms of biological role, symmetrically cleaves beta-carotene into two molecules of retinal using a dioxygenase mechanism. The polypeptide is Beta,beta-carotene 15,15'-dioxygenase (Homo sapiens (Human)).